The sequence spans 490 residues: Glutamate--tRNA ligase 1 (490 aa).

Positions 27-37 match the 'HIGH' region motif; it reads PSPTGYLHIGG. A 'KMSKS' region motif is present at residues 254–258; it reads KLSKR. Lys-257 lines the ATP pocket.

This sequence belongs to the class-I aminoacyl-tRNA synthetase family. Glutamate--tRNA ligase type 1 subfamily. As to quaternary structure, monomer.

It is found in the cytoplasm. The enzyme catalyses tRNA(Glu) + L-glutamate + ATP = L-glutamyl-tRNA(Glu) + AMP + diphosphate. In terms of biological role, catalyzes the attachment of glutamate to tRNA(Glu) in a two-step reaction: glutamate is first activated by ATP to form Glu-AMP and then transferred to the acceptor end of tRNA(Glu). This chain is Glutamate--tRNA ligase 1, found in Sphingopyxis alaskensis (strain DSM 13593 / LMG 18877 / RB2256) (Sphingomonas alaskensis).